The sequence spans 814 residues: E3 ubiquitin-protein ligase TRIM71 (814 aa).

The RING-type zinc-finger motif lies at cysteine 12–aspartate 76. The interval glutamine 111 to arginine 146 is disordered. The segment covering alanine 120–alanine 138 has biased composition (low complexity). A B box-type 1; atypical zinc finger spans residues glutamine 142–phenylalanine 189. Positions 147, 150, 171, 175, 224, 227, 247, and 252 each coordinate Zn(2+). The segment at proline 219–leucine 260 adopts a B box-type 2 zinc-finger fold. Positions arginine 282–glutamate 370 form a coiled coil. One copy of the Filamin repeat lies at serine 425–valine 526. NHL repeat units lie at residues threonine 539 to cysteine 582, histidine 586 to glutamate 629, leucine 633 to aspartate 676, leucine 680 to aspartate 723, alanine 727 to asparagine 770, and leucine 774 to phenylalanine 814.

This sequence belongs to the TRIM/RBCC family.

Its subcellular location is the cytoplasm. It localises to the P-body. It carries out the reaction S-ubiquitinyl-[E2 ubiquitin-conjugating enzyme]-L-cysteine + [acceptor protein]-L-lysine = [E2 ubiquitin-conjugating enzyme]-L-cysteine + N(6)-ubiquitinyl-[acceptor protein]-L-lysine.. Its pathway is protein modification; protein ubiquitination. Its function is as follows. E3 ubiquitin-protein ligase that cooperates with the microRNAs (miRNAs) machinery and promotes embryonic stem cells proliferation and maintenance. Binds to miRNAs and participates in post-transcriptional repression of transcripts. Required to maintain proliferation and prevent premature differentiation of neural progenitor cells during early neural development. This Xenopus tropicalis (Western clawed frog) protein is E3 ubiquitin-protein ligase TRIM71 (trim71).